A 133-amino-acid chain; its full sequence is Histone H2A.Z (133 aa).

The span at 1 to 11 shows a compositional bias: basic residues; it reads MSGKGKVHGGK. The disordered stretch occupies residues 1 to 30; that stretch reads MSGKGKVHGGKGKSSDSAKASTSHSARAGL. S2 is subject to N-acetylserine. Residues K4, K11, and K13 each carry the N6-acetyllysine modification. The segment covering 15-26 has biased composition (low complexity); sequence SDSAKASTSHSA.

It belongs to the histone H2A family. The nucleosome is a histone octamer containing two molecules each of H2A, H2B, H3 and H4 assembled in one H3-H4 heterotetramer and two H2A-H2B heterodimers. The octamer wraps approximately 147 bp of DNA. H2A or its variant H2A.Z forms a heterodimer with H2B. H2A.Z associates with the VPS72/SWC2 subunit of the SWR1 chromatin remodeling complex. Also interacts with RBP1/DNA-directed RNA polymerase II largest subunit. Acetylated once deposited into chromatin.

Its subcellular location is the nucleus. It is found in the chromosome. Its function is as follows. Variant histone H2A which can replace H2A in some nucleosomes. Nucleosomes wrap and compact DNA into chromatin, limiting DNA accessibility to the cellular machineries which require DNA as a template. Histones thereby play a central role in transcription regulation, DNA repair, DNA replication and chromosomal stability. DNA accessibility is regulated via a complex set of post-translational modifications of histones, also called histone code, and nucleosome remodeling. This variant is enriched at promoters, it may keep them in a repressed state until the appropriate activation signal is received. Near telomeres, it may counteract gene silencing caused by the spread of heterochromatin proteins. Required for the RNA polymerase II and SPT15/TBP recruitment to the target genes. Involved in chromosome stability. This is Histone H2A.Z (HTZ1) from Meyerozyma guilliermondii (strain ATCC 6260 / CBS 566 / DSM 6381 / JCM 1539 / NBRC 10279 / NRRL Y-324) (Yeast).